Here is an 88-residue protein sequence, read N- to C-terminus: Conotoxin tx9a (88 aa).

The N-terminal stretch at 1-27 is a signal peptide; sequence MHLSLARSAVLMLLLLFALGNFVVVQS. Positions 28 to 58 are excised as a propeptide; sequence GQITRDVDNGQLTDNRRNLQSKWKPVSLYMS. Cystine bridges form between C62–C76, C66–C78, and C72–C83. 4-carboxyglutamate; partial is present on residues E68 and E73. N87 is subject to Asparagine amide.

Exists in 4 different forms, depending on gamma-carboxyglutamations. Tx9a-EE does not contain gamma-carboxyglutamate, tx9a-E/gamma has one gamma-carboxyglutamate at position 73, tx9a-gamma/E has one gamma-carboxyglutamate at position 68, and tx9a-agmma/gamma has two gamma-carboxyglutamates at positions 68 and 73. As to expression, expressed by the venom duct. All different gamma-carboxyalted forms are mostly present in part 2, part 3 and part 4 of the venom duct. They are also found in part 1 (proximal part near the venom bulb) and part 5, but in lower quantity.

It localises to the secreted. Functionally, neurotoxin. In vivo, intracranial injection into mice of 10 pmol/g of the peptide induces running in circles and hyperactivity. At higher doses (50 pmol/g), the mice exhibit running and climbing symptoms for close to one hour. Between 130 and 150 pmol/g, characteristic 'spasmodic' symptomatology is elicited. A hand clap would make mice jump high and start running rapidly. When exposed to a loud hand clap, or if the cage cover were dropped, the mice lose motor control and exhibit seizure-like symptoms from which they eventually recover. At the highest doses tested (over 250 pmol/g), after the characteristic spasmodic symptomatology, lethality occurs. Injection of a similar dose range intramuscularly into Siamese fighting fish elicited no unusual symptomatology. The protein is Conotoxin tx9a of Conus textile (Cloth-of-gold cone).